We begin with the raw amino-acid sequence, 497 residues long: Glycerol kinase (497 aa).

Threonine 12 lines the ADP pocket. ATP is bound by residues threonine 12, threonine 13, and serine 14. Sn-glycerol 3-phosphate is bound at residue threonine 12. An ADP-binding site is contributed by arginine 16. Residues arginine 82, glutamate 83, tyrosine 134, and aspartate 243 each coordinate sn-glycerol 3-phosphate. Residues arginine 82, glutamate 83, tyrosine 134, aspartate 243, and glutamine 244 each coordinate glycerol. Residues threonine 265 and glycine 308 each contribute to the ADP site. The ATP site is built by threonine 265, glycine 308, glutamine 312, and glycine 411. Residue glycine 411 participates in ADP binding.

It belongs to the FGGY kinase family.

The enzyme catalyses glycerol + ATP = sn-glycerol 3-phosphate + ADP + H(+). The protein operates within polyol metabolism; glycerol degradation via glycerol kinase pathway; sn-glycerol 3-phosphate from glycerol: step 1/1. With respect to regulation, inhibited by fructose 1,6-bisphosphate (FBP). Functionally, key enzyme in the regulation of glycerol uptake and metabolism. Catalyzes the phosphorylation of glycerol to yield sn-glycerol 3-phosphate. This chain is Glycerol kinase, found in Allorhizobium ampelinum (strain ATCC BAA-846 / DSM 112012 / S4) (Agrobacterium vitis (strain S4)).